The sequence spans 1465 residues: DNA polymerase III PolC-type (1465 aa).

In terms of domain architecture, Exonuclease spans 427–583 (YVVFDVETTG…YDAEATGRLL (157 aa)).

The protein belongs to the DNA polymerase type-C family. PolC subfamily.

The protein localises to the cytoplasm. The enzyme catalyses DNA(n) + a 2'-deoxyribonucleoside 5'-triphosphate = DNA(n+1) + diphosphate. Required for replicative DNA synthesis. This DNA polymerase also exhibits 3' to 5' exonuclease activity. The sequence is that of DNA polymerase III PolC-type from Streptococcus pyogenes serotype M6 (strain ATCC BAA-946 / MGAS10394).